Here is a 396-residue protein sequence, read N- to C-terminus: Formate-dependent phosphoribosylglycinamide formyltransferase (396 aa).

N(1)-(5-phospho-beta-D-ribosyl)glycinamide-binding positions include Glu24–Leu25 and Glu84. ATP-binding positions include Arg116, Lys157, Ser162–Gln167, Glu197–Val200, and Glu205. The ATP-grasp domain occupies Arg121–Leu310. Mg(2+) is bound by residues Glu269 and Glu281. N(1)-(5-phospho-beta-D-ribosyl)glycinamide-binding positions include Asp288, Lys359, and Arg366–Arg367.

This sequence belongs to the PurK/PurT family. In terms of assembly, homodimer.

The catalysed reaction is N(1)-(5-phospho-beta-D-ribosyl)glycinamide + formate + ATP = N(2)-formyl-N(1)-(5-phospho-beta-D-ribosyl)glycinamide + ADP + phosphate + H(+). It functions in the pathway purine metabolism; IMP biosynthesis via de novo pathway; N(2)-formyl-N(1)-(5-phospho-D-ribosyl)glycinamide from N(1)-(5-phospho-D-ribosyl)glycinamide (formate route): step 1/1. Its function is as follows. Involved in the de novo purine biosynthesis. Catalyzes the transfer of formate to 5-phospho-ribosyl-glycinamide (GAR), producing 5-phospho-ribosyl-N-formylglycinamide (FGAR). Formate is provided by PurU via hydrolysis of 10-formyl-tetrahydrofolate. The protein is Formate-dependent phosphoribosylglycinamide formyltransferase of Psychromonas ingrahamii (strain DSM 17664 / CCUG 51855 / 37).